Here is a 282-residue protein sequence, read N- to C-terminus: Energy-coupling factor transporter ATP-binding protein EcfA1 (282 aa).

Residues 9 to 243 (IEIDNLSFKY…NDELLNIGLD (235 aa)) enclose the ABC transporter domain. 43–50 (GHNGSGKS) contributes to the ATP binding site.

Belongs to the ABC transporter superfamily. Energy-coupling factor EcfA family. As to quaternary structure, forms a stable energy-coupling factor (ECF) transporter complex composed of 2 membrane-embedded substrate-binding proteins (S component), 2 ATP-binding proteins (A component) and 2 transmembrane proteins (T component).

The protein localises to the cell membrane. Its function is as follows. ATP-binding (A) component of a common energy-coupling factor (ECF) ABC-transporter complex. Unlike classic ABC transporters this ECF transporter provides the energy necessary to transport a number of different substrates. In Ligilactobacillus salivarius (strain UCC118) (Lactobacillus salivarius), this protein is Energy-coupling factor transporter ATP-binding protein EcfA1.